Reading from the N-terminus, the 184-residue chain is CASP-like protein 1U2 (184 aa).

Topologically, residues 1–16 (MSYGCQVSDDEPNGSK) are cytoplasmic. A helical membrane pass occupies residues 17–37 (AVSLLLRLSTLALALTSAVVM). Residues 38-62 (ATASECTVVQLNGVVATITYKDFPP) are Extracellular-facing. Residues 63–83 (FVYLVGFNIAAAMLEAAAIYL) traverse the membrane as a helical segment. The Cytoplasmic portion of the chain corresponds to 84-100 (RLSTGGGDDDDEGFKGK). Residues 101–121 (LPGILLVVIDVAVQALVYTAT) form a helical membrane-spanning segment. Topologically, residues 122–153 (GGAFAAVSAYGPQINACGAGAGRFCGQVHQSK) are extracellular. Residues 154–174 (LLSFAGSAAVGLAVVFRDVSL) traverse the membrane as a helical segment. Residues 175 to 184 (PFSLWPTSSD) are Cytoplasmic-facing.

This sequence belongs to the Casparian strip membrane proteins (CASP) family. As to quaternary structure, homodimer and heterodimers.

The protein localises to the cell membrane. The polypeptide is CASP-like protein 1U2 (Oryza sativa subsp. japonica (Rice)).